The primary structure comprises 1154 residues: Large proline-rich protein BAG6 (1154 aa).

An N-acetylmethionine modification is found at Met1. The region spanning 17–92 (LEVLVKTLDS…HLVERAPPQT (76 aa)) is the Ubiquitin-like domain. 5 disordered regions span residues 87 to 125 (RAPP…ASVH), 186 to 274 (RGGT…HPSP), 387 to 442 (TMTG…SSHP), 463 to 531 (QDSG…QGAG), and 568 to 626 (AQAQ…SAAD). Ser96 bears the Phosphoserine mark. The segment covering 96 to 112 (SGASSGTGSASATHGGA) has biased composition (low complexity). Thr117 carries the post-translational modification Phosphothreonine. Over residues 209-218 (VALNSQTSEP) the composition is skewed to polar residues. The stretch at 237–271 (RPPTQTPELAPSGPAPAGPAPAGPAPAPETNAPNH) is repeat 1. A 4 X 29 AA approximate repeats region spans residues 237-658 (RPPTQTPELA…MASPTITVAM (422 aa)). Pro residues predominate over residues 249-263 (GPAPAGPAPAGPAPA). Positions 400 to 409 (GAEAATPGSA) are enriched in low complexity. Positions 410–426 (QATSLPPSSTTVDSSTE) are enriched in polar residues. Repeat unit 2 spans residues 416–444 (PSSTTVDSSTEGAPPPGPAPPPASSHPRV). Pro residues-rich tracts occupy residues 428-439 (APPPGPAPPPAS) and 508-521 (PTPP…PGGP). Low complexity-rich tracts occupy residues 568–581 (AQAQ…AQAP) and 591–609 (PATA…TAGP). 2 consecutive repeat copies span residues 597–624 (SAGT…QPSA) and 630–658 (SQLL…TVAM). Residues 611–622 (PGGPAQPPPPQP) show a composition bias toward pro residues. Disordered regions lie at residues 673 to 719 (QASQ…ESLP) and 968 to 1154 (PPQT…ADDP). The span at 678-702 (APPPPPPPPPPPPAPEQQSTPPPGS) shows a compositional bias: pro residues. A phosphoserine mark is found at Ser986 and Ser995. The span at 1029–1042 (AEPWAAAVPPEWVP) shows a compositional bias: low complexity. A required for interaction with GET4 region spans residues 1032–1062 (WAAAVPPEWVPIIQQDIQSQRKVKPQPPLSD). The short motif at 1034 to 1076 (AAVPPEWVPIIQQDIQSQRKVKPQPPLSDAYLSGMPAKRRKTM) is the Nuclear localization site element. The segment at 1044 to 1154 (IQQDIQSQRK…NAHRAFADDP (111 aa)) is sufficient for the delivery of client proteins to the endoplasmic reticulum. Thr1075 carries the post-translational modification Phosphothreonine. Positions 1080–1137 (GPQLLLSEAVSRAAKAAGARPLTSPESLSRDLEAPEVQESYRQQLRSDIQKRLQEDPN) are BAG-similar domain, required and sufficient for interaction with UBL4A. Low complexity predominate over residues 1088 to 1098 (AVSRAAKAAGA). 2 positions are modified to phosphoserine: Ser1103 and Ser1139.

As to quaternary structure, component of the BAG6/BAT3 complex, also named BAT3 complex, at least composed of BAG6, UBL4A and GET4/TRC35. Interacts with GET4; the interaction is direct and localizes BAG6 in the cytosol. Interacts with UBL4A; the interaction is direct and required for UBL4A protein stability. Interacts with AIFM1. Interacts with HSPA2. Interacts with CTCFL. Interacts with p300/EP300. Interacts (via ubiquitin-like domain) with RNF126; required for BAG6-dependent ubiquitination of proteins mislocalized to the cytosol. Interacts (via ubiquitin-like domain) with SGTA; SGTA competes with RNF126 by binding the same region of BAG6, thereby promoting deubiquitination of BAG6-target proteins and rescuing them from degradation. Interacts with ricin A chain. Interacts with VCP and AMFR; both form the VCP/p97-AMFR/gp78 complex. Interacts with SYVN1. Interacts with USP13; the interaction is direct and may mediate UBL4A deubiquitination. Interacts with ZFAND2B. Interacts with KPNA2. Interacts with UBQLN4. Ricin can induce a cleavage by the caspase CASP3. The released C-terminal peptide induces apoptosis.

The protein resides in the cytoplasm. It localises to the cytosol. Its subcellular location is the nucleus. It is found in the secreted. The protein localises to the extracellular exosome. Functionally, ATP-independent molecular chaperone preventing the aggregation of misfolded and hydrophobic patches-containing proteins. Functions as part of a cytosolic protein quality control complex, the BAG6/BAT3 complex, which maintains these client proteins in a soluble state and participates in their proper delivery to the endoplasmic reticulum or alternatively can promote their sorting to the proteasome where they undergo degradation. The BAG6/BAT3 complex is involved in the post-translational delivery of tail-anchored/type II transmembrane proteins to the endoplasmic reticulum membrane. Recruited to ribosomes, it interacts with the transmembrane region of newly synthesized tail-anchored proteins and together with SGTA and ASNA1 mediates their delivery to the endoplasmic reticulum. Client proteins that cannot be properly delivered to the endoplasmic reticulum are ubiquitinated by RNF126, an E3 ubiquitin-protein ligase associated with BAG6 and are sorted to the proteasome. SGTA which prevents the recruitment of RNF126 to BAG6 may negatively regulate the ubiquitination and the proteasomal degradation of client proteins. Similarly, the BAG6/BAT3 complex also functions as a sorting platform for proteins of the secretory pathway that are mislocalized to the cytosol either delivering them to the proteasome for degradation or to the endoplasmic reticulum. The BAG6/BAT3 complex also plays a role in the endoplasmic reticulum-associated degradation (ERAD), a quality control mechanism that eliminates unwanted proteins of the endoplasmic reticulum through their retrotranslocation to the cytosol and their targeting to the proteasome. It maintains these retrotranslocated proteins in an unfolded yet soluble state condition in the cytosol to ensure their proper delivery to the proteasome. BAG6 is also required for selective ubiquitin-mediated degradation of defective nascent chain polypeptides by the proteasome. In this context, it may participate in the production of antigenic peptides and play a role in antigen presentation in immune response. BAG6 is also involved in endoplasmic reticulum stress-induced pre-emptive quality control, a mechanism that selectively attenuates the translocation of newly synthesized proteins into the endoplasmic reticulum and reroutes them to the cytosol for proteasomal degradation. BAG6 may ensure the proper degradation of these proteins and thereby protects the endoplasmic reticulum from protein overload upon stress. By inhibiting the polyubiquitination and subsequent proteasomal degradation of HSPA2 it may also play a role in the assembly of the synaptonemal complex during spermatogenesis. Also positively regulates apoptosis by interacting with and stabilizing the proapoptotic factor AIFM1. By controlling the steady-state expression of the IGF1R receptor, indirectly regulates the insulin-like growth factor receptor signaling pathway. Involved in DNA damage-induced apoptosis: following DNA damage, accumulates in the nucleus and forms a complex with p300/EP300, enhancing p300/EP300-mediated p53/TP53 acetylation leading to increase p53/TP53 transcriptional activity. When nuclear, may also act as a component of some chromatin regulator complex that regulates histone 3 'Lys-4' dimethylation (H3K4me2). In terms of biological role, released extracellularly via exosomes, it is a ligand of the natural killer/NK cells receptor NCR3 and stimulates NK cells cytotoxicity. It may thereby trigger NK cells cytotoxicity against neighboring tumor cells and immature myeloid dendritic cells (DC). Its function is as follows. May mediate ricin-induced apoptosis. The polypeptide is Large proline-rich protein BAG6 (Mus musculus (Mouse)).